Consider the following 306-residue polypeptide: UDP-N-acetylenolpyruvoylglucosamine reductase (306 aa).

One can recognise an FAD-binding PCMH-type domain in the interval 34-198 (VGGPADLLIT…LEVTFKLHNS (165 aa)). The active site involves Arg-177. Catalysis depends on Ser-227, which acts as the Proton donor. Glu-297 is an active-site residue.

This sequence belongs to the MurB family. FAD is required as a cofactor.

The protein resides in the cytoplasm. The catalysed reaction is UDP-N-acetyl-alpha-D-muramate + NADP(+) = UDP-N-acetyl-3-O-(1-carboxyvinyl)-alpha-D-glucosamine + NADPH + H(+). It participates in cell wall biogenesis; peptidoglycan biosynthesis. Functionally, cell wall formation. The protein is UDP-N-acetylenolpyruvoylglucosamine reductase of Clostridium botulinum (strain Okra / Type B1).